The chain runs to 3135 residues: Beauvericin nonribosomal cyclodepsipeptide synthetase BEA1 (3135 aa).

Positions 70–458 (HVAYEISNDI…QRLRGSPDKL (389 aa)) are condensation 1. Positions 196-228 (LSNRPYTPESSDPEDDGLSLTPTDGSKTPETEG) are disordered. The segment at 499 to 896 (SLSPSKVAIC…GRMDSQVKIR (398 aa)) is adenylation 1. In terms of domain architecture, Carrier 1 spans 1021–1097 (STTTSSQSKL…GLEAIVNGSA (77 aa)). Serine 1058 carries the O-(pantetheine 4'-phosphoryl)serine modification. Residues 1115–1542 (SYSQGRLWFL…NIPISVLPLT (428 aa)) are condensation 2. The adenylation 2 stretch occupies residues 1571–1974 (FRTQVAAYPD…GRMDTQFKIR (404 aa)). The segment at 2042 to 2182 (MYADIGDIDP…FPSPEYLAQV (141 aa)) is S-adenosyl-L-methionine-dependent N-methyltransferase. Carrier domains lie at 2509-2583 (VPIS…REGL) and 2603-2677 (APRT…ESTD). Serine 2543 and serine 2637 each carry O-(pantetheine 4'-phosphoryl)serine. The tract at residues 2721–3127 (QDMYQSTQMQ…QYFLEEVCNT (407 aa)) is condensation 3.

The protein belongs to the NRP synthetase family.

The catalysed reaction is 3 (R)-2-hydroxy-3-methylbutanoate + 3 L-phenylalanine + 3 S-adenosyl-L-methionine + 6 ATP = beauvericin + 6 AMP + 3 S-adenosyl-L-homocysteine + 6 diphosphate + 6 H(+). Beauvericin nonribosomal cyclodepsipeptide synthetase; part of the gene cluster that mediates the biosynthesis of beauvericin (BEA), a non-ribosomal cyclic hexadepsipeptide that shows antibiotic, antifungal, insecticidal, and cancer cell antiproliferative and antihaptotactic activity. Ketoisovalerate reductase BEA2 catalyzes the NADPH-specific reduction of ketoisovaleric acid to hydroxyisovalerate, a precursor for beauvericin biosynthesis. The nonribosomal cyclodepsipeptide synthetase BEA1 then catalyzes the formation of beauvericin via condensation and cyclization of 3 dipeptidol monomers, each composed of one unit of hydroxyisovalerate and one unit of N-methyl-phenylalanine. The chain is Beauvericin nonribosomal cyclodepsipeptide synthetase BEA1 from Gibberella fujikuroi (strain CBS 195.34 / IMI 58289 / NRRL A-6831) (Bakanae and foot rot disease fungus).